Reading from the N-terminus, the 536-residue chain is Multifunctional cytochrome P450 monooxygenase af510 (536 aa).

Residues 4 to 24 form a helical membrane-spanning segment; the sequence is ELSTLQLSCVAFVAFMAVLVF. Asn210 and Asn293 each carry an N-linked (GlcNAc...) asparagine glycan. A heme-binding site is contributed by Cys448.

It belongs to the cytochrome P450 family. It depends on heme as a cofactor.

The protein localises to the membrane. The catalysed reaction is (+)-exo-beta-bergamotene + 2 reduced [NADPH--hemoprotein reductase] + 3 O2 = 5-dehydro-6-demethoxyfumagillol + 2 oxidized [NADPH--hemoprotein reductase] + 3 H2O + 2 H(+). The protein operates within secondary metabolite biosynthesis; terpenoid biosynthesis. In terms of biological role, multifunctional cytochrome P450 monooxygenase; part of the gene cluster that mediates the biosynthesis of fumagillin, a meroterpenoid that has numerous biological activities including irreversible inhibition of human type 2 methionine aminopeptidase (METAP2). Within the pathway, the multifunctional cytochrome P450 monooxygenase af510 acts as a 2,4,6-trichlorophenol monooxygenase that first performs the C-H hydroxylation at the bridgehead C5 position to yield 5R-hydroxyl-beta-trans-bergamotene. Subsequently, a four electron oxidation initiated at C-9 coupled to cleavage of the cyclobutane C5-C8 bond of the bicyclo[3.1.1] core yields the epoxyketone intermediate 5-keto-cordycol. An additional epoxidation reaction also catalyzed by af510 then furnishes the characteristic bisepoxide ketone 5-keto-demethoxyfumagillol. The pathway begins with the conversion of farnesyl pyrophosphate (FPP) to beta-trans-bergamotene by the membrane-bound beta-trans-bergamotene synthase af520. The multifunctional cytochrome P450 monooxygenase af510 then converts beta-trans-bergamotene into 5-keto-demethoxyfumagillol via several oxydation steps. 5-keto-demethoxyfumagillol is then subjected to successive C-6 hydroxylation and O-methylation by the dioxygenase af480 and O-methyltransferase af390-400, respectively, to yield 5-keto-fumagillol, which is then stereoselectively reduced by the keto-reductase af490 to 5R-hydroxy-seco-sesquiterpene. The next step is the polyketide transferase af380-catalyzed transfer of a dodecapentaenoyl group synthesized by the polyketide synthase af370 onto 5R-hydroxy-seco-sesquiterpene which leads to the production of prefumagillin. Finally, oxidative cleavage by the monooxygenase af470 converts prefumagillin to fumagillin. This is Multifunctional cytochrome P450 monooxygenase af510 from Aspergillus fumigatus (strain ATCC MYA-4609 / CBS 101355 / FGSC A1100 / Af293) (Neosartorya fumigata).